The chain runs to 1035 residues: Tyrosine-protein kinase-like otk (1035 aa).

An N-terminal signal peptide occupies residues 1-23 (MDMDVMMISMCILASTLMAPGWA). Ig-like C2-type domains lie at 24 to 109 (STSG…REAS), 110 to 199 (PPAK…RVMS), 251 to 365 (PEDL…APLN), 368 to 464 (PGLL…VSIN), and 469 to 559 (PKFS…VQLV). Residues 24–582 (STSGFLRVPQ…GGDGFLVTRA (559 aa)) are Extracellular-facing. Disulfide bonds link Cys-47-Cys-96, Cys-138-Cys-188, Cys-276-Cys-354, Cys-399-Cys-448, and Cys-491-Cys-543. 6 N-linked (GlcNAc...) asparagine glycosylation sites follow: Asn-336, Asn-418, Asn-430, Asn-445, Asn-513, and Asn-525. Residues 583–603 (VLITMTVALAYIVLVVGLMLW) traverse the membrane as a helical segment. The Cytoplasmic segment spans residues 604 to 1035 (CRYRRQARKA…SKAMQSVAEK (432 aa)). 2 disordered regions span residues 623-683 (AGGD…KSVY) and 721-775 (AQSD…KEEE). The segment covering 658–676 (KSNGDAQKSDDTACSQQSR) has biased composition (polar residues). Phosphoserine is present on Ser-681. Positions 693 to 1029 (LSELLQIGRG…QLGSALSKAM (337 aa)) constitute a Protein kinase; inactive domain. Positions 723 to 734 (SDKDADTEKQHS) are enriched in basic and acidic residues. The span at 766-775 (DDIEEIKEEE) shows a compositional bias: acidic residues.

This sequence belongs to the protein kinase superfamily. Tyr protein kinase family. Insulin receptor subfamily. In terms of assembly, interacts with plexA; component of a receptor complex that mediates the repulsive signaling in response to Semaphorin ligands.

The protein localises to the cell membrane. In terms of biological role, acts as a calcium-dependent, homophilic cell adhesion molecule that regulates neural recognition during the development of the nervous system. Component of the repulsive Plexin signaling response to regulate motor axon guidance at the embryonic stage. Also component of a receptor complex that is required in the adult visual system to innervate the lamina layer; specific targeting of R1-R6 axons. The polypeptide is Tyrosine-protein kinase-like otk (Drosophila persimilis (Fruit fly)).